The chain runs to 127 residues: Large ribosomal subunit protein bL12 (127 aa).

The protein belongs to the bacterial ribosomal protein bL12 family. In terms of assembly, homodimer. Part of the ribosomal stalk of the 50S ribosomal subunit. Forms a multimeric L10(L12)X complex, where L10 forms an elongated spine to which 2 to 4 L12 dimers bind in a sequential fashion. Binds GTP-bound translation factors.

Functionally, forms part of the ribosomal stalk which helps the ribosome interact with GTP-bound translation factors. Is thus essential for accurate translation. The sequence is that of Large ribosomal subunit protein bL12 from Nitratiruptor sp. (strain SB155-2).